The chain runs to 93 residues: Small ribosomal subunit protein uS19 (93 aa).

Belongs to the universal ribosomal protein uS19 family.

In terms of biological role, protein S19 forms a complex with S13 that binds strongly to the 16S ribosomal RNA. This chain is Small ribosomal subunit protein uS19, found in Renibacterium salmoninarum (strain ATCC 33209 / DSM 20767 / JCM 11484 / NBRC 15589 / NCIMB 2235).